Reading from the N-terminus, the 552-residue chain is Glucose-6-phosphate isomerase (552 aa).

Glu359 acts as the Proton donor in catalysis. Residues His390 and Lys514 contribute to the active site.

The protein belongs to the GPI family.

The protein localises to the cytoplasm. It carries out the reaction alpha-D-glucose 6-phosphate = beta-D-fructose 6-phosphate. Its pathway is carbohydrate biosynthesis; gluconeogenesis. It functions in the pathway carbohydrate degradation; glycolysis; D-glyceraldehyde 3-phosphate and glycerone phosphate from D-glucose: step 2/4. Its function is as follows. Catalyzes the reversible isomerization of glucose-6-phosphate to fructose-6-phosphate. This is Glucose-6-phosphate isomerase from Streptomyces griseus subsp. griseus (strain JCM 4626 / CBS 651.72 / NBRC 13350 / KCC S-0626 / ISP 5235).